A 29-amino-acid polypeptide reads, in one-letter code: Photosystem I reaction center subunit XII (29 aa).

Residues Ile-7 to Thr-26 traverse the membrane as a helical segment.

This sequence belongs to the PsaM family.

The protein localises to the plastid. The protein resides in the chloroplast thylakoid membrane. The chain is Photosystem I reaction center subunit XII from Guillardia theta (Cryptophyte).